We begin with the raw amino-acid sequence, 573 residues long: Urease subunit alpha 1 (573 aa).

In terms of domain architecture, Urease spans 136–573 (GGIDTHVHFI…LPLAQRYFLF (438 aa)). Residues His141, His143, and Lys224 each contribute to the Ni(2+) site. At Lys224 the chain carries N6-carboxylysine. A substrate-binding site is contributed by His226. Residues His253 and His279 each coordinate Ni(2+). His327 serves as the catalytic Proton donor. Asp367 is a binding site for Ni(2+).

This sequence belongs to the metallo-dependent hydrolases superfamily. Urease alpha subunit family. May form a heterohexamer of 3 UreC (alpha) and 3 UreAB (gamma/beta) subunits. May also form a heterotrimer of UreA (gamma), UreB (beta) and UreC (alpha) subunits. Three heterotrimers associate to form the active enzyme. Ni cation is required as a cofactor. Carboxylation allows a single lysine to coordinate two nickel ions.

It is found in the cytoplasm. It catalyses the reaction urea + 2 H2O + H(+) = hydrogencarbonate + 2 NH4(+). It functions in the pathway nitrogen metabolism; urea degradation; CO(2) and NH(3) from urea (urease route): step 1/1. In Streptomyces coelicolor (strain ATCC BAA-471 / A3(2) / M145), this protein is Urease subunit alpha 1.